The sequence spans 240 residues: Adapter protein MecA (240 aa).

The span at 119 to 132 (QRKQQKKNHQDKQQ) shows a compositional bias: basic and acidic residues. A disordered region spans residues 119-138 (QRKQQKKNHQDKQQRRAHKP).

It belongs to the MecA family. In terms of assembly, homodimer.

Functionally, enables the recognition and targeting of unfolded and aggregated proteins to the ClpC protease or to other proteins involved in proteolysis. In Staphylococcus epidermidis (strain ATCC 35984 / DSM 28319 / BCRC 17069 / CCUG 31568 / BM 3577 / RP62A), this protein is Adapter protein MecA.